Here is a 199-residue protein sequence, read N- to C-terminus: Recombination protein RecR (199 aa).

The C4-type zinc finger occupies 58 to 73; it reads CRRCFNLTEGEECDIC. The Toprim domain occupies 81 to 176; it reads SVICVVEDPY…RVTALASGLP (96 aa).

This sequence belongs to the RecR family.

Functionally, may play a role in DNA repair. It seems to be involved in an RecBC-independent recombinational process of DNA repair. It may act with RecF and RecO. This chain is Recombination protein RecR, found in Rubrobacter xylanophilus (strain DSM 9941 / JCM 11954 / NBRC 16129 / PRD-1).